A 128-amino-acid chain; its full sequence is Sulfurtransferase TusD (128 aa).

Cys-78 acts as the Cysteine persulfide intermediate in catalysis.

This sequence belongs to the DsrE/TusD family. Heterohexamer, formed by a dimer of trimers. The hexameric TusBCD complex contains 2 copies each of TusB, TusC and TusD. The TusBCD complex interacts with TusE.

It is found in the cytoplasm. Functionally, part of a sulfur-relay system required for 2-thiolation of 5-methylaminomethyl-2-thiouridine (mnm(5)s(2)U) at tRNA wobble positions. Accepts sulfur from TusA and transfers it in turn to TusE. This chain is Sulfurtransferase TusD, found in Shigella dysenteriae serotype 1 (strain Sd197).